The chain runs to 177 residues: Large ribosomal subunit protein uL30 (177 aa).

It belongs to the universal ribosomal protein uL30 family. Part of the 50S ribosomal subunit.

The protein is Large ribosomal subunit protein uL30 of Pyrobaculum islandicum (strain DSM 4184 / JCM 9189 / GEO3).